Here is an 86-residue protein sequence, read N- to C-terminus: Small ribosomal subunit protein bS20 (86 aa).

A disordered region spans residues 1-22 (MANIASARKRARQAEKNRQHNM).

It belongs to the bacterial ribosomal protein bS20 family.

In terms of biological role, binds directly to 16S ribosomal RNA. The chain is Small ribosomal subunit protein bS20 from Thioalkalivibrio sulfidiphilus (strain HL-EbGR7).